Reading from the N-terminus, the 140-residue chain is Nucleoside diphosphate kinase (140 aa).

Positions 11, 59, 87, 93, 104, and 114 each coordinate ATP. H117 acts as the Pros-phosphohistidine intermediate in catalysis.

The protein belongs to the NDK family. In terms of assembly, homotetramer. Requires Mg(2+) as cofactor.

The protein resides in the cytoplasm. The catalysed reaction is a 2'-deoxyribonucleoside 5'-diphosphate + ATP = a 2'-deoxyribonucleoside 5'-triphosphate + ADP. It catalyses the reaction a ribonucleoside 5'-diphosphate + ATP = a ribonucleoside 5'-triphosphate + ADP. Functionally, major role in the synthesis of nucleoside triphosphates other than ATP. The ATP gamma phosphate is transferred to the NDP beta phosphate via a ping-pong mechanism, using a phosphorylated active-site intermediate. This is Nucleoside diphosphate kinase from Granulibacter bethesdensis (strain ATCC BAA-1260 / CGDNIH1).